The chain runs to 403 residues: Serine/threonine transporter SstT (403 aa).

The next 9 membrane-spanning stretches (helical) occupy residues 14–34, 44–64, 79–99, 138–158, 175–195, 214–234, 295–315, 327–347, and 353–373; these read VTQI…APAI, VFVS…VMAS, ILWL…VASM, ALLN…GVAL, GVTL…FGLV, LAVL…LIVF, MAGA…TLGI, VVAA…LLLI, and LFGI…IIGV.

It belongs to the dicarboxylate/amino acid:cation symporter (DAACS) (TC 2.A.23) family.

The protein localises to the cell inner membrane. It carries out the reaction L-serine(in) + Na(+)(in) = L-serine(out) + Na(+)(out). The enzyme catalyses L-threonine(in) + Na(+)(in) = L-threonine(out) + Na(+)(out). Involved in the import of serine and threonine into the cell, with the concomitant import of sodium (symport system). This is Serine/threonine transporter SstT from Pseudomonas putida (strain ATCC 700007 / DSM 6899 / JCM 31910 / BCRC 17059 / LMG 24140 / F1).